Reading from the N-terminus, the 288-residue chain is Phenazine biosynthesis-like domain-containing protein (288 aa).

E46 is an active-site residue.

It belongs to the PhzF family. In terms of assembly, interacts with UNRIP/MAWD.

This is Phenazine biosynthesis-like domain-containing protein (Pbld) from Rattus norvegicus (Rat).